We begin with the raw amino-acid sequence, 409 residues long: Adenosine deaminase (409 aa).

Zn(2+) is bound by residues His65, His67, His207, and Asp314.

It belongs to the metallo-dependent hydrolases superfamily. Requires Zn(2+) as cofactor.

It carries out the reaction adenosine + H2O + H(+) = inosine + NH4(+). Catalyzes the deamination of adenosine into inosine. Is also able to deaminate adenine, but with considerably less efficiency. Is not active toward 6-chloroadenine. In Helicobacter pylori (strain ATCC 700392 / 26695) (Campylobacter pylori), this protein is Adenosine deaminase.